Reading from the N-terminus, the 72-residue chain is MANASGNMSAVRETMDVLLEISRLLNTGLDMETLSICVRLCEQGINPEALSSVIKELRRASDTLKASESTAS.

This sequence belongs to the MOZART1 family. Part of the gamma-tubulin complex.

The protein resides in the cytoplasm. The protein localises to the cytoskeleton. Its subcellular location is the microtubule organizing center. It is found in the centrosome. It localises to the spindle. Required for gamma-tubulin complex recruitment to the centrosome. This Xenopus laevis (African clawed frog) protein is Mitotic-spindle organizing protein 1 (mzt1).